The sequence spans 172 residues: Bone marrow stromal antigen 2 (172 aa).

Residues 1-26 (MAPSFYHYLPVAMDERWEPKGWSIRR) lie on the Cytoplasmic side of the membrane. K20 participates in a covalent cross-link: Glycyl lysine isopeptide (Lys-Gly) (interchain with G-Cter in ubiquitin). A helical; Signal-anchor for type II membrane protein membrane pass occupies residues 27–47 (WWLVAAILVVLIGVVLVCLIV). At 48-152 (YFANAAHSEA…EISTTVQVNS (105 aa)) the chain is on the extracellular side. N-linked (GlcNAc...) asparagine glycans are attached at residues N70 and N97. Residues 103–149 (LRDSLKKKVSQTQEQQARIKELENKIERLNQELENLRTQKEISTTVQ) are a coiled coil. S152 carries the GPI-anchor amidated serine lipid modification. Residues 153–172 (GGSVVVSSLLVLVAVLFLHF) constitute a propeptide, removed in mature form.

Parallel homodimer; disulfide-linked. May form homotetramers under reducing conditions. Isoform 1 and isoform 2 form homodimers and also heterodimers with each other. Dimerization is essential for its antiviral activity. Interacts (via cytoplasmic domain) with ARHGAP44. Interacts with MMP14 (via C-terminal cytoplasmic tail). Interacts with LILRA4/ILT7. Interacts with RNF115. Post-translationally, N-glycosylated. In terms of processing, the GPI anchor is essential for its antiviral activity. Ubiquitously expressed, with highest levels in brain and liver. Present in liver (at protein level).

It is found in the golgi apparatus. Its subcellular location is the trans-Golgi network. The protein resides in the cell membrane. The protein localises to the late endosome. It localises to the membrane raft. It is found in the cytoplasm. Its subcellular location is the apical cell membrane. Its function is as follows. IFN-induced antiviral host restriction factor which efficiently blocks the release of diverse mammalian enveloped viruses by directly tethering nascent virions to the membranes of infected cells. Acts as a direct physical tether, holding virions to the cell membrane and linking virions to each other. The tethered virions can be internalized by endocytosis and subsequently degraded or they can remain on the cell surface. In either case, their spread as cell-free virions is restricted. Its target viruses belong to diverse families, including retroviridae: human immunodeficiency virus type 1 (HIV-1), mouse mammary tumor virus (MMTV) and murine leukemia virus (MLV), filoviridae: ebola virus (EBOV), arenaviridae: lassa virus (LASV), and rhabdoviridae: vesicular stomatitis virus (VSV). Can inhibit cell surface proteolytic activity of MMP14 causing decreased activation of MMP15 which results in inhibition of cell growth and migration. Can stimulate signaling by LILRA4/ILT7 and consequently provide negative feedback to the production of IFN by plasmacytoid dendritic cells in response to viral infection. Plays a role in the organization of the subapical actin cytoskeleton in polarized epithelial cells. The polypeptide is Bone marrow stromal antigen 2 (Bst2) (Rattus norvegicus (Rat)).